We begin with the raw amino-acid sequence, 269 residues long: Glutamate racemase (269 aa).

Substrate contacts are provided by residues 11–12 (DS) and 43–44 (YG). The active-site Proton donor/acceptor is Cys74. Residue 75 to 76 (NT) coordinates substrate. Cys185 serves as the catalytic Proton donor/acceptor. Position 186 to 187 (186 to 187 (TH)) interacts with substrate.

This sequence belongs to the aspartate/glutamate racemases family.

The catalysed reaction is L-glutamate = D-glutamate. It participates in cell wall biogenesis; peptidoglycan biosynthesis. Functionally, provides the (R)-glutamate required for cell wall biosynthesis. The protein is Glutamate racemase of Bacillus cereus (strain G9842).